A 124-amino-acid chain; its full sequence is Fluoride-specific ion channel FluC (124 aa).

The next 4 membrane-spanning stretches (helical) occupy residues 1–21 (MAYL…HFIN), 36–56 (TFFI…YLAF), 66–86 (LFLM…SLDA), and 94–114 (AVGL…AGLF). Na(+) contacts are provided by G74 and T77.

This sequence belongs to the fluoride channel Fluc/FEX (TC 1.A.43) family.

Its subcellular location is the cell inner membrane. It catalyses the reaction fluoride(in) = fluoride(out). Its activity is regulated as follows. Na(+) is not transported, but it plays an essential structural role and its presence is essential for fluoride channel function. Its function is as follows. Fluoride-specific ion channel. Important for reducing fluoride concentration in the cell, thus reducing its toxicity. The chain is Fluoride-specific ion channel FluC from Rhodopseudomonas palustris (strain ATCC BAA-98 / CGA009).